A 602-amino-acid chain; its full sequence is Elongation factor 4 (602 aa).

The tr-type G domain occupies Ser-7–Thr-196. GTP is bound by residues Asp-19–Thr-24 and Asn-136–Asp-139.

It belongs to the TRAFAC class translation factor GTPase superfamily. Classic translation factor GTPase family. LepA subfamily.

Its subcellular location is the cell inner membrane. The enzyme catalyses GTP + H2O = GDP + phosphate + H(+). In terms of biological role, required for accurate and efficient protein synthesis under certain stress conditions. May act as a fidelity factor of the translation reaction, by catalyzing a one-codon backward translocation of tRNAs on improperly translocated ribosomes. Back-translocation proceeds from a post-translocation (POST) complex to a pre-translocation (PRE) complex, thus giving elongation factor G a second chance to translocate the tRNAs correctly. Binds to ribosomes in a GTP-dependent manner. The polypeptide is Elongation factor 4 (Prochlorococcus marinus (strain MIT 9515)).